A 1065-amino-acid polypeptide reads, in one-letter code: Probable importin-7 homolog (1065 aa).

Positions 25-98 (AEAQLQQIKV…KENLIDLLVH (74 aa)) constitute an Importin N-terminal domain. Residues 958–996 (ENGGDLGEDEGDNFDDQNDDDDQDSEEDLFEDEDTPDFE) form a disordered region. The span at 963 to 996 (LGEDEGDNFDDQNDDDDQDSEEDLFEDEDTPDFE) shows a compositional bias: acidic residues.

It belongs to the importin beta family.

It localises to the cytoplasm. It is found in the nucleus. Its function is as follows. May function in nuclear protein import. This is Probable importin-7 homolog from Dictyostelium discoideum (Social amoeba).